The sequence spans 563 residues: Membrane protein insertase YidC (563 aa).

The helical transmembrane segment at 1–21 (MDIKRTILIVALAIVTYVGVL) threads the bilayer. The interval 43–62 (APGIPDTAAGTNGSASADVP) is disordered. 5 consecutive transmembrane segments (helical) span residues 344–364 (LELT…FWLL), 370–390 (ILGN…GLFF), 440–460 (LGGC…YWVL), 471–491 (WILW…PIIM), and 518–538 (PIIF…YWVV).

It belongs to the OXA1/ALB3/YidC family. Type 1 subfamily. Interacts with the Sec translocase complex via SecD. Specifically interacts with transmembrane segments of nascent integral membrane proteins during membrane integration.

The protein resides in the cell inner membrane. In terms of biological role, required for the insertion and/or proper folding and/or complex formation of integral membrane proteins into the membrane. Involved in integration of membrane proteins that insert both dependently and independently of the Sec translocase complex, as well as at least some lipoproteins. Aids folding of multispanning membrane proteins. This chain is Membrane protein insertase YidC, found in Pseudomonas syringae pv. syringae (strain B728a).